Consider the following 476-residue polypeptide: Exodeoxyribonuclease 7 large subunit (476 aa).

Belongs to the XseA family. In terms of assembly, heterooligomer composed of large and small subunits.

It localises to the cytoplasm. It catalyses the reaction Exonucleolytic cleavage in either 5'- to 3'- or 3'- to 5'-direction to yield nucleoside 5'-phosphates.. Functionally, bidirectionally degrades single-stranded DNA into large acid-insoluble oligonucleotides, which are then degraded further into small acid-soluble oligonucleotides. This is Exodeoxyribonuclease 7 large subunit from Bartonella tribocorum (strain CIP 105476 / IBS 506).